The chain runs to 304 residues: uncharacterized protein (304 aa).

This is an uncharacterized protein from Ureaplasma parvum serovar 3 (strain ATCC 700970).